The primary structure comprises 190 residues: DNA-invertase hin (190 aa).

The region spanning Ala-2–Gly-135 is the Resolvase/invertase-type recombinase catalytic domain. The O-(5'-phospho-DNA)-serine intermediate role is filled by Ser-10. The H-T-H motif DNA-binding region spans Arg-162–Pro-181.

This sequence belongs to the site-specific recombinase resolvase family.

Functionally, a DNA fragment of approximately 900 base pairs, adjacent to the fljB (H2) gene, which specifies the synthesis of phase-2 flagellin, can exist in either orientation with respect to fljB. The orientation of the inversion region controls expression of fljB. The hin gene occupies about two-thirds of the inversion region; it is required for the inversion of the fljB controlling region. This Salmonella typhimurium (strain LT2 / SGSC1412 / ATCC 700720) protein is DNA-invertase hin (hin).